Here is a 53-residue protein sequence, read N- to C-terminus: MTKKGPLNLRLLLLLLVVLLPSCSNCALTSSQELRPSSEWRRKMITVWSKSSY.

The first 26 residues, 1–26 (MTKKGPLNLRLLLLLLVVLLPSCSNC), serve as a signal peptide directing secretion. Residues 37-53 (SSEWRRKMITVWSKSSY) carry the SCOOP motif motif. A SxS motif essential for MIK2 binding motif is present at residues 49–51 (SKS).

The protein belongs to the serine rich endogenous peptide (SCOOP) phytocytokine family. In terms of assembly, interacts with MIK2 (via extracellular leucine-rich repeat domain); this interaction triggers the formation of complex between MIK2 and the BAK1/SERK3 and SERK4 coreceptors, and subsequent BAK1 activation by phosphorylation.

It is found in the cell membrane. Its subcellular location is the secreted. It localises to the extracellular space. The protein resides in the apoplast. In terms of biological role, brassicaceae-specific phytocytokine (plant endogenous peptide released into the apoplast) perceived by MIK2 in a BAK1/SERK3 and SERK4 coreceptors-dependent manner, that modulates various physiological and antimicrobial processes including growth prevention and reactive oxygen species (ROS) response regulation. In Arabidopsis thaliana (Mouse-ear cress), this protein is Serine rich endogenous peptide 3.